Here is a 255-residue protein sequence, read N- to C-terminus: tRNA (guanine-N(1)-)-methyltransferase (255 aa).

S-adenosyl-L-methionine contacts are provided by residues Gly-117 and 137-142; that span reads LGDFVL.

Belongs to the RNA methyltransferase TrmD family. Homodimer.

It localises to the cytoplasm. The enzyme catalyses guanosine(37) in tRNA + S-adenosyl-L-methionine = N(1)-methylguanosine(37) in tRNA + S-adenosyl-L-homocysteine + H(+). In terms of biological role, specifically methylates guanosine-37 in various tRNAs. In Paraburkholderia xenovorans (strain LB400), this protein is tRNA (guanine-N(1)-)-methyltransferase.